The following is a 288-amino-acid chain: Ribosome biogenesis GTPase A (288 aa).

A CP-type G domain is found at arginine 14–proline 179. Residues asparagine 58–aspartate 61, asparagine 131–threonine 136, and glycine 175 each bind GTP.

The protein belongs to the TRAFAC class YlqF/YawG GTPase family. MTG1 subfamily. As to quaternary structure, interacts with ctc. Interacts with the immature 50S ribosome subunit. 2 molecules of rbgA bind to one 50S subunit.

The protein localises to the cytoplasm. Its function is as follows. Essential protein that is required for a late step of 50S ribosomal subunit assembly. Has GTPase activity that is stimulated by interaction with the immature 50S ribosome subunit. Binds to the 23S rRNA. Required for the association of ribosomal proteins rplP and rpmA with the large subunit. The sequence is that of Ribosome biogenesis GTPase A from Priestia megaterium (strain DSM 319 / IMG 1521) (Bacillus megaterium).